Consider the following 157-residue polypeptide: Small ribosomal subunit protein uS7 (157 aa).

The protein belongs to the universal ribosomal protein uS7 family. As to quaternary structure, part of the 30S ribosomal subunit. Contacts proteins S9 and S11.

In terms of biological role, one of the primary rRNA binding proteins, it binds directly to 16S rRNA where it nucleates assembly of the head domain of the 30S subunit. Is located at the subunit interface close to the decoding center, probably blocks exit of the E-site tRNA. The protein is Small ribosomal subunit protein uS7 of Pseudomonas fluorescens (strain Pf0-1).